A 279-amino-acid chain; its full sequence is S-methyl-5'-thioadenosine phosphorylase (279 aa).

Residues Ser13, Arg55–His56, and Thr88–Ala89 each bind phosphate. Met191 is a substrate binding site. Thr192 contacts phosphate. Residue Asp215–Asp217 coordinates substrate.

The protein belongs to the PNP/MTAP phosphorylase family. MTAP subfamily. In terms of assembly, homotrimer.

It is found in the cytoplasm. The protein resides in the nucleus. It carries out the reaction S-methyl-5'-thioadenosine + phosphate = 5-(methylsulfanyl)-alpha-D-ribose 1-phosphate + adenine. Its pathway is amino-acid biosynthesis; L-methionine biosynthesis via salvage pathway; S-methyl-5-thio-alpha-D-ribose 1-phosphate from S-methyl-5'-thioadenosine (phosphorylase route): step 1/1. In terms of biological role, catalyzes the reversible phosphorylation of S-methyl-5'-thioadenosine (MTA) to adenine and 5-methylthioribose-1-phosphate. Involved in the breakdown of MTA, a major by-product of polyamine biosynthesis. Responsible for the first step in the methionine salvage pathway after MTA has been generated from S-adenosylmethionine. Has broad substrate specificity with 6-aminopurine nucleosides as preferred substrates. This chain is S-methyl-5'-thioadenosine phosphorylase, found in Aedes aegypti (Yellowfever mosquito).